The primary structure comprises 199 residues: Recombination protein RecR (199 aa).

Residues 57 to 72 (CQSCRTYTEETLCPIC) form a C4-type zinc finger. Residues 81–176 (STICVVETPA…MISRIAHGVP (96 aa)) form the Toprim domain.

Belongs to the RecR family.

May play a role in DNA repair. It seems to be involved in an RecBC-independent recombinational process of DNA repair. It may act with RecF and RecO. This chain is Recombination protein RecR, found in Shewanella baltica (strain OS155 / ATCC BAA-1091).